Here is a 338-residue protein sequence, read N- to C-terminus: 1-aminocyclopropane-1-carboxylate deaminase (338 aa).

Lys51 bears the N6-(pyridoxal phosphate)lysine mark. The active-site Nucleophile is the Ser78.

This sequence belongs to the ACC deaminase/D-cysteine desulfhydrase family. As to quaternary structure, homotrimer. Pyridoxal 5'-phosphate is required as a cofactor.

The catalysed reaction is 1-aminocyclopropane-1-carboxylate + H2O = 2-oxobutanoate + NH4(+). Catalyzes a cyclopropane ring-opening reaction, the irreversible conversion of 1-aminocyclopropane-1-carboxylate (ACC) to ammonia and alpha-ketobutyrate. Allows growth on ACC as a nitrogen source. In Burkholderia vietnamiensis (strain G4 / LMG 22486) (Burkholderia cepacia (strain R1808)), this protein is 1-aminocyclopropane-1-carboxylate deaminase.